The following is a 174-amino-acid chain: Secreted cysteine-rich protein UMAG_00792 (174 aa).

The N-terminal stretch at 1-26 (MVSFKSSSLFLHSLSALLVLTTLSSA) is a signal peptide. N77 carries an N-linked (GlcNAc...) asparagine glycan.

In terms of assembly, secreted cysteine-rich proteins (SCRPs) are predicted to form amyloids.

The protein resides in the secreted. In terms of biological role, secreted cysteine-rich protein that might form amyloid strutures which are involved in attachment to hydrophobic surfaces and in formation of hydrophobic aerial hyphae. The polypeptide is Secreted cysteine-rich protein UMAG_00792 (Mycosarcoma maydis (Corn smut fungus)).